Consider the following 331-residue polypeptide: MKIAIDAMGGDFAPENIVKGVNLAKKELSDVTFQLYGDGAKIRQFLDDETAIEIIETTEVIDFHDDPVAAIKSKKDSSLVRAVTAVKKREADAVLSAGSTGALLTAGLMLVKRIKQVSRPALMSTLPTADGRGFDMLDLGANTENTAHHLVDFAILGSYYAENVRGIEKPRVALISNGSEESKGSPTVKEAHEILSAMTEINFIGNIESRDLLSGGADVVVTDGFTGNAILKAIEGTATVLMKEIKSAIMAGSVTTKIGGVLIKKPLSGLKDLMSTDGAGGAAFVGLKAPVVKAHGNSSELAIASALKQIHKMLESDVSGKLVKHFENMDK.

The protein belongs to the PlsX family. In terms of assembly, homodimer. Probably interacts with PlsY.

The protein localises to the cytoplasm. The catalysed reaction is a fatty acyl-[ACP] + phosphate = an acyl phosphate + holo-[ACP]. Its pathway is lipid metabolism; phospholipid metabolism. Its function is as follows. Catalyzes the reversible formation of acyl-phosphate (acyl-PO(4)) from acyl-[acyl-carrier-protein] (acyl-ACP). This enzyme utilizes acyl-ACP as fatty acyl donor, but not acyl-CoA. This Lactococcus lactis subsp. cremoris (strain SK11) protein is Phosphate acyltransferase.